The primary structure comprises 398 residues: Elongation factor Tu (398 aa).

Positions lysine 10–glutamate 207 constitute a tr-type G domain. A G1 region spans residues glycine 19–threonine 26. Glycine 19–threonine 26 contacts GTP. Threonine 26 lines the Mg(2+) pocket. The segment at glycine 63–asparagine 67 is G2. Positions aspartate 84–glycine 87 are G3. GTP-binding positions include aspartate 84–histidine 88 and asparagine 139–aspartate 142. Residues asparagine 139–aspartate 142 form a G4 region. Residues serine 177–leucine 179 form a G5 region.

Belongs to the TRAFAC class translation factor GTPase superfamily. Classic translation factor GTPase family. EF-Tu/EF-1A subfamily. As to quaternary structure, monomer.

The protein resides in the cytoplasm. The enzyme catalyses GTP + H2O = GDP + phosphate + H(+). In terms of biological role, GTP hydrolase that promotes the GTP-dependent binding of aminoacyl-tRNA to the A-site of ribosomes during protein biosynthesis. This chain is Elongation factor Tu, found in Streptococcus pyogenes serotype M49 (strain NZ131).